The primary structure comprises 602 residues: Elongation factor 4 (602 aa).

A tr-type G domain is found at 7 to 189; the sequence is RNIRNFSIIA…AIVQRIPAPQ (183 aa). Residues 19–24 and 136–139 each bind GTP; these read DHGKST and NKID.

This sequence belongs to the TRAFAC class translation factor GTPase superfamily. Classic translation factor GTPase family. LepA subfamily.

The protein resides in the cell inner membrane. The enzyme catalyses GTP + H2O = GDP + phosphate + H(+). In terms of biological role, required for accurate and efficient protein synthesis under certain stress conditions. May act as a fidelity factor of the translation reaction, by catalyzing a one-codon backward translocation of tRNAs on improperly translocated ribosomes. Back-translocation proceeds from a post-translocation (POST) complex to a pre-translocation (PRE) complex, thus giving elongation factor G a second chance to translocate the tRNAs correctly. Binds to ribosomes in a GTP-dependent manner. The protein is Elongation factor 4 of Xylella fastidiosa (strain M12).